A 355-amino-acid polypeptide reads, in one-letter code: C-X-C chemokine receptor type 1 (355 aa).

Residues 1–40 (MEVNVWNMTDLWTWFEDEFANATGMPPVEKDYSPCLVVTQ) are Extracellular-facing. N-linked (GlcNAc...) asparagine glycosylation is found at N7 and N21. Residues 41–67 (TLNKYVVVVIYALVFLLSLLGNSLVML) traverse the membrane as a helical segment. Residues 68 to 73 (VILYSR) are Cytoplasmic-facing. The chain crosses the membrane as a helical span at residues 74–92 (SNRSVTDVYLLNLAMADLL). Topologically, residues 93 to 114 (FALTMPIWAVSKEKGWIFGTPL) are extracellular. The helical transmembrane segment at 115-138 (CKVVSLVKEVNFYSGILLLACISV) threads the bilayer. C115 and C192 are oxidised to a cystine. The Cytoplasmic portion of the chain corresponds to 139–159 (DRYLAIVHATRTLTQKRHLVK). The chain crosses the membrane as a helical span at residues 160–184 (FICLGIWALSLILSLPFFLFRQVFS). Topologically, residues 185 to 204 (PNNSSPVCYEDLGHNTAKWR) are extracellular. A helical membrane pass occupies residues 205–232 (MVLRILPHTFGFILPLLVMLFCYGFTLR). The Cytoplasmic segment spans residues 233-247 (TLFQAHMGQKHRAMR). The chain crosses the membrane as a helical span at residues 248–270 (VIFAVVLIFLLCWLPYNLVLLAD). Topologically, residues 271-290 (TLMRTHVIQETCQRRNDIDR) are extracellular. Residues 291 to 313 (ALDATEILGFLHSCLNPIIYAFI) form a helical membrane-spanning segment. Residues 314–355 (GQNFRNGFLKMLAARGLISKEFLTRHRVTSYTSSSTNVPSNL) lie on the Cytoplasmic side of the membrane.

It belongs to the G-protein coupled receptor 1 family. In terms of assembly, interacts with IL8. Interacts with GNAI2. As to expression, neutrophils.

Its subcellular location is the cell membrane. Its function is as follows. Receptor to interleukin-8, which is a powerful neutrophils chemotactic factor. Binding of IL-8 to the receptor causes activation of neutrophils. This response is mediated via a G-protein that activates a phosphatidylinositol-calcium second messenger system. The sequence is that of C-X-C chemokine receptor type 1 (CXCR1) from Oryctolagus cuniculus (Rabbit).